The primary structure comprises 1063 residues: Integrin alpha-8 (1063 aa).

Positions 1-38 (MSPGASRGPRGSQAPLIAPLCCAAAALGMLLWSPACQA) are cleaved as a signal peptide. The Extracellular portion of the chain corresponds to 39-1012 (FNLDVEKLTV…TPNVSFSIPL (974 aa)). FG-GAP repeat units follow at residues 44–105 (EKLT…GSAQ), 122–183 (NGTK…AYAE), 188–240 (RNSN…IANY), 253–306 (KQTE…STDM), 307–372 (TFIQ…LLFR), 373–431 (DPQI…GLNT), and 435–498 (QVLQ…LHPM). Residue Asn-81 is glycosylated (N-linked (GlcNAc...) asparagine). Cys-96 and Cys-106 are disulfide-bonded. Residue Asn-122 is glycosylated (N-linked (GlcNAc...) asparagine). Cys-150 and Cys-171 are disulfide-bonded. Residue Asn-177 is glycosylated (N-linked (GlcNAc...) asparagine). A disulfide bond links Cys-187 and Cys-200. Asn-239 carries N-linked (GlcNAc...) asparagine glycosylation. Ca(2+) is bound by residues Glu-275, Thr-277, Asp-279, and Glu-283. Residues Asn-302 and Asn-311 are each glycosylated (N-linked (GlcNAc...) asparagine). Positions 329, 331, 333, 335, 337, 395, 397, 399, 401, and 403 each coordinate Ca(2+). A Cell attachment site motif is present at residues 455–457 (RGD). Ca(2+)-binding residues include Asp-459, Asp-461, Asn-463, Tyr-465, and Asp-467. N-linked (GlcNAc...) asparagine glycosylation is present at Asn-504. Disulfide bonds link Cys-507–Cys-518 and Cys-524–Cys-580. N-linked (GlcNAc...) asparagine glycosylation is found at Asn-601 and Asn-605. 2 disulfide bridges follow: Cys-641-Cys-647 and Cys-713-Cys-726. Residues Asn-719, Asn-737, Asn-753, Asn-780, Asn-896, and Asn-923 are each glycosylated (N-linked (GlcNAc...) asparagine). 2 cysteine pairs are disulfide-bonded: Cys-867-Cys-924 and Cys-929-Cys-934. Residue Asn-1005 is glycosylated (N-linked (GlcNAc...) asparagine). Residues 1013–1033 (WVIILAILLGLLVLAILTLAL) form a helical membrane-spanning segment. The Cytoplasmic portion of the chain corresponds to 1034–1063 (WKCGFFDRARPPQEDMTDREQLTNDKTPEA).

The protein belongs to the integrin alpha chain family. Heterodimer of an alpha and a beta subunit. The alpha subunit is composed of a heavy and a light chain linked by a disulfide bond. Alpha-8 associates with beta-1. In terms of tissue distribution, expressed in mesenchymal cells, including alveolar myofibroblasts, kidney mesangial cells and hepatic stellar cells and vascular and visceral smooth muscle (at protein level).

It is found in the membrane. Its subcellular location is the cell membrane. Functionally, integrin alpha-8/beta-1 functions in the genesis of kidney and probably of other organs by regulating the recruitment of mesenchymal cells into epithelial structures. It recognizes the sequence R-G-D in a wide array of ligands including TNC, FN1, SPP1 TGFB1, TGFB3 and VTN. NPNT is probably its functional ligand in kidney genesis. Neuronal receptor for TNC it mediates cell-cell interactions and regulates neurite outgrowth of sensory and motor neurons. The chain is Integrin alpha-8 (ITGA8) from Homo sapiens (Human).